Here is a 122-residue protein sequence, read N- to C-terminus: Large ribosomal subunit protein uL14c (122 aa).

The protein belongs to the universal ribosomal protein uL14 family. As to quaternary structure, part of the 50S ribosomal subunit.

Its subcellular location is the plastid. The protein localises to the chloroplast. Its function is as follows. Binds to 23S rRNA. The sequence is that of Large ribosomal subunit protein uL14c from Chlorella vulgaris (Green alga).